The primary structure comprises 291 residues: Feruloyl esterase B (291 aa).

The N-terminal stretch at 1-18 is a signal peptide; that stretch reads MLVRSFLGFAVLAATCLA. Residue asparagine 117 is glycosylated (N-linked (GlcNAc...) asparagine). The active-site Charge relay system is serine 136. Asparagine 179 is a glycosylation site (N-linked (GlcNAc...) asparagine).

The protein belongs to the carbohydrate esterase 1 (CE1) family. Feruloyl esterase type B subfamily.

Its subcellular location is the secreted. It carries out the reaction feruloyl-polysaccharide + H2O = ferulate + polysaccharide.. In terms of biological role, feruloyl esterase which acts in synergy with xylanases in degradation of plant cell walls. Hydrolyzes the ester linkage of hydroxycinnamic acids (ferulic acid (FA) and p-coumaric acid) and diferulates present in plant cell walls. Is active on substrates containing ferulic acid ester linked to the C-5 and C-2 linkages of arabinofuranose, while it was found capable of de-esterifying acetylated glucuronoxylans. Efficiently releases ferulic acid (FA) from destarched wheat bran when incubated with an M3 xylanase. This Thermothelomyces thermophilus (strain ATCC 42464 / BCRC 31852 / DSM 1799) (Sporotrichum thermophile) protein is Feruloyl esterase B (Fae1a).